The following is a 215-amino-acid chain: Cytochrome b6 (215 aa).

A helical transmembrane segment spans residues 32 to 52 (IFYCLGGITLTCFLVQVATGF). C35 contributes to the heme c binding site. Heme b is bound by residues H86 and H100. Helical transmembrane passes span 90 to 110 (ASMM…TGGF), 116 to 136 (LTWV…VTGY), and 186 to 206 (LHTF…FPMI). H187 and H202 together coordinate heme b.

The protein belongs to the cytochrome b family. PetB subfamily. In terms of assembly, the 4 large subunits of the cytochrome b6-f complex are cytochrome b6, subunit IV (17 kDa polypeptide, PetD), cytochrome f and the Rieske protein, while the 4 small subunits are PetG, PetL, PetM and PetN. The complex functions as a dimer. Heme b serves as cofactor. Heme c is required as a cofactor.

It is found in the plastid. Its subcellular location is the chloroplast thylakoid membrane. Component of the cytochrome b6-f complex, which mediates electron transfer between photosystem II (PSII) and photosystem I (PSI), cyclic electron flow around PSI, and state transitions. The chain is Cytochrome b6 from Daucus carota (Wild carrot).